The chain runs to 1080 residues: Carbamoyl phosphate synthase large chain (1080 aa).

The segment at 1 to 403 is carboxyphosphate synthetic domain; that stretch reads MPKRTDLRTI…SLQKAVRGLE (403 aa). ATP contacts are provided by Arg129, Arg169, Gly175, Gly176, Glu208, Val210, Glu215, Gly241, Val242, His243, Gln285, and Glu299. In terms of domain architecture, ATP-grasp 1 spans 133–328; it reads RVAMQEIGLE…IAKIAAKLAV (196 aa). The Mg(2+) site is built by Gln285, Glu299, and Asn301. Gln285, Glu299, and Asn301 together coordinate Mn(2+). The tract at residues 404–554 is oligomerization domain; sequence TGKVGLEPTG…YSTYEEECEA (151 aa). The interval 555-942 is carbamoyl phosphate synthetic domain; that stretch reads APSDRRKIMI…AFARAQEAGD (388 aa). Positions 679 to 876 constitute an ATP-grasp 2 domain; it reads QRLVQQLGLR…LAKIAARCMT (198 aa). Arg715, Arg754, Leu756, Glu761, Gly787, Val788, His789, Ser790, Gln830, and Glu847 together coordinate ATP. 3 residues coordinate Mg(2+): Gln830, Glu847, and Asn849. The Mn(2+) site is built by Gln830, Glu847, and Asn849. The MGS-like domain occupies 943 to 1080; sequence IRAPQPGRAF…LQELHKELQV (138 aa). The allosteric domain stretch occupies residues 943–1080; it reads IRAPQPGRAF…LQELHKELQV (138 aa).

Belongs to the CarB family. Composed of two chains; the small (or glutamine) chain promotes the hydrolysis of glutamine to ammonia, which is used by the large (or ammonia) chain to synthesize carbamoyl phosphate. Tetramer of heterodimers (alpha,beta)4. Mg(2+) is required as a cofactor. It depends on Mn(2+) as a cofactor.

The enzyme catalyses hydrogencarbonate + L-glutamine + 2 ATP + H2O = carbamoyl phosphate + L-glutamate + 2 ADP + phosphate + 2 H(+). The catalysed reaction is hydrogencarbonate + NH4(+) + 2 ATP = carbamoyl phosphate + 2 ADP + phosphate + 2 H(+). It functions in the pathway amino-acid biosynthesis; L-arginine biosynthesis; carbamoyl phosphate from bicarbonate: step 1/1. Its pathway is pyrimidine metabolism; UMP biosynthesis via de novo pathway; (S)-dihydroorotate from bicarbonate: step 1/3. Large subunit of the glutamine-dependent carbamoyl phosphate synthetase (CPSase). CPSase catalyzes the formation of carbamoyl phosphate from the ammonia moiety of glutamine, carbonate, and phosphate donated by ATP, constituting the first step of 2 biosynthetic pathways, one leading to arginine and/or urea and the other to pyrimidine nucleotides. The large subunit (synthetase) binds the substrates ammonia (free or transferred from glutamine from the small subunit), hydrogencarbonate and ATP and carries out an ATP-coupled ligase reaction, activating hydrogencarbonate by forming carboxy phosphate which reacts with ammonia to form carbamoyl phosphate. This is Carbamoyl phosphate synthase large chain from Xylella fastidiosa (strain Temecula1 / ATCC 700964).